A 186-amino-acid polypeptide reads, in one-letter code: Elongation factor P (186 aa).

This sequence belongs to the elongation factor P family.

It localises to the cytoplasm. It functions in the pathway protein biosynthesis; polypeptide chain elongation. In terms of biological role, involved in peptide bond synthesis. Stimulates efficient translation and peptide-bond synthesis on native or reconstituted 70S ribosomes in vitro. Probably functions indirectly by altering the affinity of the ribosome for aminoacyl-tRNA, thus increasing their reactivity as acceptors for peptidyl transferase. In Streptococcus sanguinis (strain SK36), this protein is Elongation factor P.